We begin with the raw amino-acid sequence, 340 residues long: GTP 3',8-cyclase (340 aa).

The 220-residue stretch at 8 to 227 (KLGRPIRDLR…SMIQEEFDIE (220 aa)) folds into the Radical SAM core domain. R17 serves as a coordination point for GTP. The [4Fe-4S] cluster site is built by C24 and C28. An S-adenosyl-L-methionine-binding site is contributed by Y30. Residue C31 participates in [4Fe-4S] cluster binding. R71 is a GTP binding site. G75 contacts S-adenosyl-L-methionine. T102 is a binding site for GTP. S126 contacts S-adenosyl-L-methionine. GTP is bound at residue K163. M197 is an S-adenosyl-L-methionine binding site. The [4Fe-4S] cluster site is built by C261 and C264. GTP is bound at residue 266-268 (RAR). C278 serves as a coordination point for [4Fe-4S] cluster.

It belongs to the radical SAM superfamily. MoaA family. In terms of assembly, monomer and homodimer. The cofactor is [4Fe-4S] cluster.

It carries out the reaction GTP + AH2 + S-adenosyl-L-methionine = (8S)-3',8-cyclo-7,8-dihydroguanosine 5'-triphosphate + 5'-deoxyadenosine + L-methionine + A + H(+). The protein operates within cofactor biosynthesis; molybdopterin biosynthesis. Catalyzes the cyclization of GTP to (8S)-3',8-cyclo-7,8-dihydroguanosine 5'-triphosphate. This Staphylococcus carnosus (strain TM300) protein is GTP 3',8-cyclase.